Reading from the N-terminus, the 368-residue chain is tRNA-specific 2-thiouridylase MnmA (368 aa).

Residues 11–18 (GMSGGVDS) and M37 contribute to the ATP site. Residues 97–99 (NPD) form an interaction with target base in tRNA region. C102 acts as the Nucleophile in catalysis. C102 and C199 form a disulfide bridge. G127 is a binding site for ATP. Positions 149–151 (KDQ) are interaction with tRNA. C199 serves as the catalytic Cysteine persulfide intermediate. The segment at 311–312 (RY) is interaction with tRNA.

It belongs to the MnmA/TRMU family. In terms of assembly, interacts with TusE.

The protein localises to the cytoplasm. It catalyses the reaction S-sulfanyl-L-cysteinyl-[protein] + uridine(34) in tRNA + AH2 + ATP = 2-thiouridine(34) in tRNA + L-cysteinyl-[protein] + A + AMP + diphosphate + H(+). In terms of biological role, catalyzes the 2-thiolation of uridine at the wobble position (U34) of tRNA(Lys), tRNA(Glu) and tRNA(Gln), leading to the formation of s(2)U34, the first step of tRNA-mnm(5)s(2)U34 synthesis. Sulfur is provided by IscS, via a sulfur-relay system. Binds ATP and its substrate tRNAs. The chain is tRNA-specific 2-thiouridylase MnmA from Salmonella choleraesuis (strain SC-B67).